The primary structure comprises 793 residues: Protocadherin beta-7 (793 aa).

Positions 1-26 (MEARVERAVQKRQVLFLCVFLGMSWA) are cleaved as a signal peptide. Residues 27–688 (GAEPLRYFVA…DQANSLTVYL (662 aa)) lie on the Extracellular side of the membrane. Cadherin domains lie at 35-133 (VAEE…APVF), 138-242 (ISLK…APDF), 247-347 (YKVQ…RPEL), 352-451 (LTSP…APAF), and 456-561 (YTLF…SPFV). N-linked (GlcNAc...) asparagine glycosylation occurs at asparagine 169. Asparagine 418 and asparagine 436 each carry an N-linked (GlcNAc...) asparagine glycan. A glycan (N-linked (GlcNAc...) asparagine) is linked at asparagine 567. The Cadherin 6 domain occupies 568 to 671 (SSAPCTEPLP…LVDGFSQPYL (104 aa)). Residues 689–709 (VVALASVSSLFLLSVLLFVAV) form a helical membrane-spanning segment. Residues 710-793 (RLCRRSRAAP…NRPFQNNLGF (84 aa)) lie on the Cytoplasmic side of the membrane.

Its subcellular location is the cell membrane. In terms of biological role, potential calcium-dependent cell-adhesion protein. May be involved in the establishment and maintenance of specific neuronal connections in the brain. The chain is Protocadherin beta-7 (PCDHB7) from Homo sapiens (Human).